Consider the following 734-residue polypeptide: Protein SKG6 (734 aa).

Residues 30-68 form a disordered region; that stretch reads TRRDDSDSSSSSASSTKNSKSAECTGSKQQCQLPTDSSH. The span at 37 to 51 shows a compositional bias: low complexity; sequence SSSSSASSTKNSKSA. Over residues 53–68 the composition is skewed to polar residues; that stretch reads CTGSKQQCQLPTDSSH. A helical membrane pass occupies residues 72-96; it reads VTVGVAVAVPVGVIIIVLAVILCIV. Phosphoserine is present on serine 137. At threonine 169 the chain carries Phosphothreonine. Residues serine 191, serine 193, and serine 219 each carry the phosphoserine modification. Threonine 221 is modified (phosphothreonine). Phosphoserine occurs at positions 222 and 251. Positions 239 to 327 are disordered; it reads RFQESESFRS…LRFGKDDDNY (89 aa). Residues 253–273 are compositionally biased toward polar residues; it reads IHNNQLSRGSATEGANKQFTF. Residues 280–299 show a composition bias toward low complexity; that stretch reads SSSVSEEAEVLNESNESASN. A compositionally biased stretch (basic and acidic residues) spans 309-327; it reads SSEKTHERNLRFGKDDDNY. Serine 369 bears the Phosphoserine mark. Residues 647–671 form a disordered region; it reads DLTAKPSYKPAGSFRSVSATNSRNN. A compositionally biased stretch (polar residues) spans 661 to 671; sequence RSVSATNSRNN. Phosphoserine occurs at positions 672 and 717. The interval 707–734 is disordered; it reads SVGGILPHSGSQDDLRKQLGSSHNYTVN. The span at 725-734 shows a compositional bias: polar residues; it reads LGSSHNYTVN.

This sequence belongs to the SKG6/TOS2 family. In terms of assembly, interacts with ZDS1 and ZDS2. Phosphorylated by CDC28.

The protein localises to the membrane. Functionally, may be involved in the polarity establishment process. Suppresses the lethality of KEX2-GAS1 double null mutant when overexpressed. This chain is Protein SKG6 (SKG6), found in Saccharomyces cerevisiae (strain ATCC 204508 / S288c) (Baker's yeast).